We begin with the raw amino-acid sequence, 209 residues long: uncharacterized protein (209 aa).

3 helical membrane-spanning segments follow: residues Ala10–Phe32, Leu37–Ile59, and Phe64–Val86.

It is found in the cell membrane. This is an uncharacterized protein from Aquifex aeolicus (strain VF5).